Here is a 452-residue protein sequence, read N- to C-terminus: UDP-N-acetylmuramate--L-alanine ligase (452 aa).

121 to 127 (GTHGKTT) contacts ATP.

This sequence belongs to the MurCDEF family.

Its subcellular location is the cytoplasm. The enzyme catalyses UDP-N-acetyl-alpha-D-muramate + L-alanine + ATP = UDP-N-acetyl-alpha-D-muramoyl-L-alanine + ADP + phosphate + H(+). It participates in cell wall biogenesis; peptidoglycan biosynthesis. Functionally, cell wall formation. The protein is UDP-N-acetylmuramate--L-alanine ligase of Christiangramia forsetii (strain DSM 17595 / CGMCC 1.15422 / KT0803) (Gramella forsetii).